Here is an 808-residue protein sequence, read N- to C-terminus: DNA replication licensing factor MCM3 (808 aa).

Ala-2 bears the N-acetylalanine mark. Ser-160 and Ser-275 each carry phosphoserine. Lys-293 carries the post-translational modification N6-acetyllysine. The MCM domain occupies 295-502; that stretch reads IFDQLAKSLA…QDREISDHVL (208 aa). ADP is bound by residues Gln-353, Leu-393, Glu-394, Ala-395, and Ala-397. The Arginine finger motif lies at 477 to 480; it reads SRFD. Ala-523 is a binding site for ATP. Position 535 is a phosphoserine; by ATM (Ser-535). Lys-547 is modified (N6-acetyllysine). Ser-611 carries the phosphoserine modification. The segment at 662 to 739 is disordered; it reads KKRKKRSEDE…ETKESQKVEL (78 aa). Arg-664 is a binding site for ATP. Phosphoserine occurs at positions 668 and 672. 2 stretches are compositionally biased toward acidic residues: residues 670–681 and 704–717; these read DESETEDEEEKS and SYDP…EEEM. Thr-674 bears the Phosphothreonine mark. Ser-681 is modified (phosphoserine). Position 708 is a phosphotyrosine (Tyr-708). Phosphoserine is present on Ser-711. Residues Thr-713, Thr-722, and Thr-725 each carry the phosphothreonine modification. Over residues 727–739 the composition is skewed to basic and acidic residues; sequence DSQETKESQKVEL. Phosphoserine occurs at positions 728 and 734.

Belongs to the MCM family. As to quaternary structure, component of the MCM2-7 complex. The complex forms a toroidal hexameric ring with the proposed subunit order MCM2-MCM6-MCM4-MCM7-MCM3-MCM5. Component of the CMG helicase complex, a hexameric ring of related MCM2-7 subunits stabilized by CDC45 and the tetrameric GINS complex. Associated with the replication-specific DNA polymerase alpha. Interacts with MCMBP. Interacts with ANKRD17. Interacts with MCM3AP isoform MCM3AP; this interaction leads to MCM3 acetylation. In terms of processing, acetylated by MCM3AP. O-glycosylated (O-GlcNAcylated), in a cell cycle-dependent manner.

The protein localises to the nucleus. The protein resides in the chromosome. It catalyses the reaction ATP + H2O = ADP + phosphate + H(+). Functionally, acts as a component of the MCM2-7 complex (MCM complex) which is the replicative helicase essential for 'once per cell cycle' DNA replication initiation and elongation in eukaryotic cells. Core component of CDC45-MCM-GINS (CMG) helicase, the molecular machine that unwinds template DNA during replication, and around which the replisome is built. The active ATPase sites in the MCM2-7 ring are formed through the interaction surfaces of two neighboring subunits such that a critical structure of a conserved arginine finger motif is provided in trans relative to the ATP-binding site of the Walker A box of the adjacent subunit. The six ATPase active sites, however, are likely to contribute differentially to the complex helicase activity. Required for the entry in S phase and for cell division. In Homo sapiens (Human), this protein is DNA replication licensing factor MCM3.